The primary structure comprises 165 residues: Inorganic pyrophosphatase (165 aa).

K21, R35, and Y47 together coordinate substrate. Residues D57, D62, and D94 each contribute to the Mg(2+) site. Y131 is a binding site for substrate.

It belongs to the PPase family. In terms of assembly, homohexamer. It depends on Mg(2+) as a cofactor.

Its subcellular location is the cytoplasm. It catalyses the reaction diphosphate + H2O = 2 phosphate + H(+). Functionally, catalyzes the hydrolysis of inorganic pyrophosphate (PPi) forming two phosphate ions. This chain is Inorganic pyrophosphatase, found in Geobacillus stearothermophilus (Bacillus stearothermophilus).